A 911-amino-acid polypeptide reads, in one-letter code: Inositol 1,4,5-triphosphate receptor associated 1 (911 aa).

Positions 1 to 11 (MVKAPQSEERL) are enriched in basic and acidic residues. 4 disordered regions span residues 1 to 21 (MVKA…NNSV), 39 to 122 (EVPG…HRHL), 174 to 405 (LTRR…GPRL), and 478 to 498 (EQEK…ESKG). Positions 68–86 (AAQSPAGQDPATTGISCSP) are enriched in polar residues. Basic residues predominate over residues 111–122 (HSPHRRLSHRHL). Residue S118 is modified to Phosphoserine. The interval 152 to 184 (SEEDKKKNLALLEEAKLVSERFLTRRGRKSRSS) is interaction with PRKG1. Polar residues predominate over residues 183 to 212 (SSPGESSPAVSPNLSPGASPASSQSNSLTV). A compositionally biased stretch (basic and acidic residues) spans 277–292 (TVEKSKEITIEQKENF). A Phosphoserine modification is found at S393. The segment at 534-580 (NVFVQLSLAFRNDSYTLESRINQAERERNLTEENTEKELENFKASIT) is interaction with ITPR1. Residues 547 to 645 (SYTLESRINQ…MQYVENLKRT (99 aa)) adopt a coiled-coil conformation. S683 and S696 each carry phosphoserine. 2 disordered regions span residues 706-766 (LNLP…TPSC) and 787-829 (YQEG…KEQR). Over residues 708-728 (LPGQSPSSSPIPSLPALSESS) the composition is skewed to low complexity. Residues 790–801 (GLKKTKELQGLR) are compositionally biased toward basic and acidic residues. The span at 802–825 (EEEEEQKSESPEEPEEVAETEEEE) shows a compositional bias: acidic residues. A helical transmembrane segment spans residues 853–873 (VIWMMAAAMLVLTVVLGLYGS).

As to quaternary structure, interacts with PRKG1/cGKI-beta and ITPR1/IP3R type I. Part of cGMP kinase signaling complex at least composed of ACTA2/alpha-actin, CNN1/calponin H1, PLN/phospholamban, PRKG1 and ITPR1. Interacts with HCN4; regulates HCN4 channel activity. In terms of processing, phosphorylated by PRKG1/cGKI-beta. Phosphorylation at Ser-696 is necessary for PRKG1-induced calcium release in the cytosol. In terms of tissue distribution, highly expressed in trachea, aorta and uterus.

It is found in the sarcoplasmic reticulum. Its subcellular location is the cytoplasm. The protein localises to the perinuclear region. The protein resides in the membrane. Its function is as follows. Plays a role as NO/PRKG1-dependent regulator of IP3-induced calcium release; its phosphorylation by PRKG1 inhibits bradykinin and IP3-induced calcium release from intracellular stores. Recruits PRKG1 to the endoplasmic reticulum and may mediate the assembly of PRKG1 and ITPR1 in a macrocomplex. Involved in PRKG1 signaling cascade leading to inhibition of platelet activation and aggregation. Also mediates NO-dependent inhibition of calcium signaling in gastrointestinal smooth muscle contributing to NO-dependent relaxation. Plays a role in the regulation of cellular excitability by regulating the hyperpolarization-activated cyclic nucleotide-gated HCN4 channel activity. The polypeptide is Inositol 1,4,5-triphosphate receptor associated 1 (IRAG1) (Bos taurus (Bovine)).